The sequence spans 206 residues: Large ribosomal subunit protein uL22m (206 aa).

A mitochondrion-targeting transit peptide spans 1–40 (MAAAVLGQLGALWIHNLRSRGKLALGVLPQSYIHTSASLD).

It belongs to the universal ribosomal protein uL22 family. As to quaternary structure, component of the mitochondrial large ribosomal subunit (mt-LSU). Mature mammalian 55S mitochondrial ribosomes consist of a small (28S) and a large (39S) subunit. The 28S small subunit contains a 12S ribosomal RNA (12S mt-rRNA) and 30 different proteins. The 39S large subunit contains a 16S rRNA (16S mt-rRNA), a copy of mitochondrial valine transfer RNA (mt-tRNA(Val)), which plays an integral structural role, and 52 different proteins.

Its subcellular location is the mitochondrion. This is Large ribosomal subunit protein uL22m (MRPL22) from Homo sapiens (Human).